A 368-amino-acid polypeptide reads, in one-letter code: Heme A synthase (368 aa).

Transmembrane regions (helical) follow at residues 14–34, 104–124, 129–149, 161–181, and 200–220; these read AVRIWLTLVAALIAVMVLVGG, VIGIVYLLPFLWFLWRGAIGP, ALWIIFALGALQGAVGWWMVA, VRLATHLSLALIIYAAIVWTL, and ALALLGLTFVQLYAGALVAGL. H264 serves as a coordination point for heme. A run of 3 helical transmembrane segments spans residues 266 to 283, 296 to 316, and 318 to 338; these read MLAYALWTLAALHMIDAL, FLALTAQATLGIFTVLYAAPI, and LALVHQAMALVVLTLAVLQAE. Residue H322 coordinates heme.

It belongs to the COX15/CtaA family. Type 2 subfamily. As to quaternary structure, interacts with CtaB. Requires heme b as cofactor.

Its subcellular location is the cell membrane. It carries out the reaction Fe(II)-heme o + 2 A + H2O = Fe(II)-heme a + 2 AH2. The protein operates within porphyrin-containing compound metabolism; heme A biosynthesis; heme A from heme O: step 1/1. In terms of biological role, catalyzes the conversion of heme O to heme A by two successive hydroxylations of the methyl group at C8. The first hydroxylation forms heme I, the second hydroxylation results in an unstable dihydroxymethyl group, which spontaneously dehydrates, resulting in the formyl group of heme A. The chain is Heme A synthase from Rhodopseudomonas palustris (strain ATCC BAA-98 / CGA009).